Consider the following 402-residue polypeptide: NAD-dependent protein deacetylase sirtuin-7 (402 aa).

2 disordered regions span residues 1-25 (MAAG…REEQ) and 59-78 (VTEL…RQEE). The segment covering 9–25 (RSERKAAERVRRLREEQ) has biased composition (basic and acidic residues). The region spanning 83–330 (PEELRRKVRE…RLLMDELGLE (248 aa)) is the Deacetylase sirtuin-type domain. NAD(+)-binding positions include 108 to 127 (GAGI…NGVW) and 168 to 171 (QNCD). The active-site Proton acceptor is the histidine 188. Zn(2+)-binding residues include cysteine 196, cysteine 199, cysteine 226, and cysteine 229. NAD(+)-binding positions include 269 to 271 (GSS), 298 to 300 (NLQ), and cysteine 316. A disordered region spans residues 355–385 (SHSRKSLCRSREEPPPGDQSAPLASATPILG). Position 390 is an asymmetric dimethylarginine; alternate (arginine 390). Arginine 390 carries the omega-N-methylarginine; alternate modification.

Belongs to the sirtuin family. Class IV subfamily. As to quaternary structure, interacts with UBTF and the RNA polymerase I complex. Interacts with components of the B-WICH complex, such as MYBBP1A, SMARCA5/SNF2H and BAZ1B/WSTF. Interacts with ELK4, leading to stabilization at target promoters for H3K18Ac deacetylation. Interacts with histone H2A and/or histone H2B. Interacts with DNMT1. Interacts with SIRT1. Requires Zn(2+) as cofactor. Post-translationally, phosphorylated during mitosis. In terms of processing, methylation at Arg-390 by PRMT6 inhibits the H3K18Ac histone deacetylase activity, promoting mitochondria biogenesis and maintaining mitochondria respiration. Ubiquitinated via 'Lys-63'-linked ubiquitin chains. Deubiquitinated by USP7, inhibiting the H3K18Ac histone deacetylase activity and regulating gluconeogenesis. Ubiquitinated by E3 ubiquitin-protein ligase complex containing FBXO7; leading to proteasomal degradation.

It localises to the nucleus. The protein localises to the nucleolus. Its subcellular location is the nucleoplasm. The protein resides in the chromosome. It is found in the cytoplasm. It catalyses the reaction N(6)-acetyl-L-lysyl-[protein] + NAD(+) + H2O = 2''-O-acetyl-ADP-D-ribose + nicotinamide + L-lysyl-[protein]. The catalysed reaction is N(6)-glutaryl-L-lysyl-[protein] + NAD(+) + H2O = 2''-O-glutaryl-ADP-D-ribose + nicotinamide + L-lysyl-[protein]. It carries out the reaction N(6)-succinyl-L-lysyl-[protein] + NAD(+) + H2O = 2''-O-succinyl-ADP-D-ribose + nicotinamide + L-lysyl-[protein]. The enzyme catalyses N(6)-propanoyl-L-lysyl-[protein] + NAD(+) + H2O = 3''-O-propanoyl-ADP-D-ribose + nicotinamide + L-lysyl-[protein]. It catalyses the reaction N(6)-decanoyl-L-lysyl-[protein] + NAD(+) + H2O = 2''-O-decanoyl-ADP-D-ribose + nicotinamide + L-lysyl-[protein]. NAD-dependent protein-lysine deacetylase and deacylase activities are activated by nucleic acids. Histone deacetylase activity is activated by DNA. Protein-lysine deacylase activity is activated by RNA. H3K18Ac histone deacetylase activity is inhibited by methylation at Arg-390. H3K18Ac histone deacetylase activity is inhibited by deubiquitination by USP7. In terms of biological role, NAD-dependent protein-lysine deacylase that can act both as a deacetylase or deacylase (desuccinylase, depropionylase, deglutarylase and dedecanoylase), depending on the context. Specifically mediates deacetylation of histone H3 at 'Lys-18' (H3K18Ac). In contrast to other histone deacetylases, displays strong preference for a specific histone mark, H3K18Ac, directly linked to control of gene expression. H3K18Ac is mainly present around the transcription start site of genes and has been linked to activation of nuclear hormone receptors; SIRT7 thereby acts as a transcription repressor. Moreover, H3K18 hypoacetylation has been reported as a marker of malignancy in various cancers and seems to maintain the transformed phenotype of cancer cells. Also able to mediate deacetylation of histone H3 at 'Lys-36' (H3K36Ac) in the context of nucleosomes. Also mediates deacetylation of non-histone proteins, such as ATM, CDK9, DDX21, DDB1, FBL, FKBP5/FKBP51, GABPB1, RAN, RRP9/U3-55K and POLR1E/PAF53. Enriched in nucleolus where it stimulates transcription activity of the RNA polymerase I complex. Acts by mediating the deacetylation of the RNA polymerase I subunit POLR1E/PAF53, thereby promoting the association of RNA polymerase I with the rDNA promoter region and coding region. In response to metabolic stress, SIRT7 is released from nucleoli leading to hyperacetylation of POLR1E/PAF53 and decreased RNA polymerase I transcription. Required to restore the transcription of ribosomal RNA (rRNA) at the exit from mitosis. Promotes pre-ribosomal RNA (pre-rRNA) cleavage at the 5'-terminal processing site by mediating deacetylation of RRP9/U3-55K, a core subunit of the U3 snoRNP complex. Mediates 'Lys-37' deacetylation of Ran, thereby regulating the nuclear export of NF-kappa-B subunit RELA/p65. Acts as a regulator of DNA damage repair by mediating deacetylation of ATM during the late stages of DNA damage response, promoting ATM dephosphorylation and deactivation. Suppresses the activity of the DCX (DDB1-CUL4-X-box) E3 ubiquitin-protein ligase complexes by mediating deacetylation of DDB1, which prevents the interaction between DDB1 and CUL4 (CUL4A or CUL4B). Activates RNA polymerase II transcription by mediating deacetylation of CDK9, thereby promoting 'Ser-2' phosphorylation of the C-terminal domain (CTD) of RNA polymerase II. Deacetylates FBL, promoting histone-glutamine methyltransferase activity of FBL. Acts as a regulator of mitochondrial function by catalyzing deacetylation of GABPB1. Regulates Akt/AKT1 activity by mediating deacetylation of FKBP5/FKBP51. Required to prevent R-loop-associated DNA damage and transcription-associated genomic instability by mediating deacetylation and subsequent activation of DDX21, thereby overcoming R-loop-mediated stalling of RNA polymerases. In addition to protein deacetylase activity, also acts as a protein-lysine deacylase. Acts as a protein depropionylase by mediating depropionylation of Osterix (SP7), thereby regulating bone formation by osteoblasts. Acts as a histone deglutarylase by mediating deglutarylation of histone H4 on 'Lys-91' (H4K91glu); a mark that destabilizes nucleosomes by promoting dissociation of the H2A-H2B dimers from nucleosomes. Acts as a histone desuccinylase: in response to DNA damage, recruited to DNA double-strand breaks (DSBs) and catalyzes desuccinylation of histone H3 on 'Lys-122' (H3K122succ), thereby promoting chromatin condensation and DSB repair. Also promotes DSB repair by promoting H3K18Ac deacetylation, regulating non-homologous end joining (NHEJ). Along with its role in DNA repair, required for chromosome synapsis during prophase I of female meiosis by catalyzing H3K18Ac deacetylation. Involved in transcriptional repression of LINE-1 retrotransposon via H3K18Ac deacetylation, and promotes their association with the nuclear lamina. Required to stabilize ribosomal DNA (rDNA) heterochromatin and prevent cellular senescence induced by rDNA instability. Acts as a negative regulator of SIRT1 by preventing autodeacetylation of SIRT1, restricting SIRT1 deacetylase activity. This chain is NAD-dependent protein deacetylase sirtuin-7, found in Rattus norvegicus (Rat).